The chain runs to 669 residues: Exostosin-like 1 (669 aa).

Over 1–8 (MLWRRKSF) the chain is Cytoplasmic. The helical; Signal-anchor for type II membrane protein transmembrane segment at 9–29 (WLALSAFWLLLVLLGVFPLRL) threads the bilayer. The Lumenal portion of the chain corresponds to 30–669 (AVLPGPLPGR…RKKYRSLEKP (640 aa)). Residues N263 and N480 are each glycosylated (N-linked (GlcNAc...) asparagine). A disulfide bond links C577 and C627. The segment at 601-621 (RQHPEAVPMDSGDPRPVPEPQ) is disordered.

It belongs to the glycosyltransferase 47 family.

It localises to the endoplasmic reticulum membrane. The enzyme catalyses 3-O-{[(1-&gt;4)-beta-D-GlcA-(1-&gt;4)-alpha-D-GlcNAc](n)-(1-&gt;4)-beta-D-GlcA-(1-&gt;3)-beta-D-Gal-(1-&gt;3)-beta-D-Gal-(1-&gt;4)-beta-D-Xyl}-L-seryl-[protein] + UDP-N-acetyl-alpha-D-glucosamine = 3-O-{alpha-D-GlcNAc-[(1-&gt;4)-beta-D-GlcA-(1-&gt;4)-alpha-D-GlcNAc](n)-(1-&gt;4)-beta-D-GlcA-(1-&gt;3)-beta-D-Gal-(1-&gt;3)-beta-D-Gal-(1-&gt;4)-beta-D-Xyl}-L-seryl-[protein] + UDP + H(+). Its pathway is protein modification; protein glycosylation. Its function is as follows. Glycosyltransferase required for the biosynthesis of heparan-sulfate (HS). Transfers N-acetyl-alpha-D-glucosamine to the nascent HS chain (GlcNAcT-II activity). Appears to lack GlcNAcT I and GlcAT-II activities. The chain is Exostosin-like 1 (Extl1) from Mus musculus (Mouse).